The following is a 270-amino-acid chain: 23S rRNA (adenosine(1067)-2'-O)-methyltransferase (270 aa).

Residues Arg135, Arg165, Gly218, Ile238, and Leu247 each contribute to the S-adenosyl-L-methionine site.

The protein belongs to the class IV-like SAM-binding methyltransferase superfamily. RNA methyltransferase TsnR/AvirB family.

It catalyses the reaction adenosine(1067) in 23S rRNA + S-adenosyl-L-methionine = 2'-O-methyladenosine(1067) in 23S rRNA + S-adenosyl-L-homocysteine + H(+). Functionally, specifically methylates the adenosine-1067 in 23S ribosomal RNA. Confers resistance to antibiotic thiostrepton. The chain is 23S rRNA (adenosine(1067)-2'-O)-methyltransferase from Streptomyces laurentii.